A 356-amino-acid polypeptide reads, in one-letter code: MRVTDFSFELPESLIAHYPMPERSSCRLLSLDGPTGALTHGTFTDLLDKLNPGDLLVFNNTRVIPARLFGRKASGGKIEVLVERMLDDKRILAHIRASKAPKPGAELLLGDDESINATMTARHGALFEVGFNDERSVLDILNSIGHMPLPPYIDRPDEDADRELYQTVYSEKPGAVAAPTAGLHFDEPLLEKLRAKGVEMAFVTLHVGAGTFQPVRVDTIEDHIMHSEYAEVPQDVVDAVLAAKARGNRVIAVGTTSVRSLESAAQAAKNDLIEPFFDDTQIFIYPGFQYKVVDALVTNFHLPESTLIMLVSAFAGYQHTMNAYKAAVEEKYRFFSYGDAMFITYNPQAINERVGE.

This sequence belongs to the QueA family. As to quaternary structure, monomer.

It is found in the cytoplasm. The enzyme catalyses 7-aminomethyl-7-carbaguanosine(34) in tRNA + S-adenosyl-L-methionine = epoxyqueuosine(34) in tRNA + adenine + L-methionine + 2 H(+). Its pathway is tRNA modification; tRNA-queuosine biosynthesis. In terms of biological role, transfers and isomerizes the ribose moiety from AdoMet to the 7-aminomethyl group of 7-deazaguanine (preQ1-tRNA) to give epoxyqueuosine (oQ-tRNA). This chain is S-adenosylmethionine:tRNA ribosyltransferase-isomerase, found in Escherichia coli O8 (strain IAI1).